A 153-amino-acid chain; its full sequence is Transcriptional repressor NrdR (153 aa).

A zinc finger lies at 3–34; it reads CPSCQHHGTRVLDSRPVDEGRSIRRRRECEQC. The ATP-cone domain maps to 49–139; that stretch reads LIVVKKQGMR…VYRQFKDLNV (91 aa).

The protein belongs to the NrdR family. Zn(2+) is required as a cofactor.

Functionally, negatively regulates transcription of bacterial ribonucleotide reductase nrd genes and operons by binding to NrdR-boxes. This chain is Transcriptional repressor NrdR, found in Geobacillus sp. (strain WCH70).